Consider the following 212-residue polypeptide: Adenylate kinase (212 aa).

10–15 (GAGKGT) is an ATP binding site. The segment at 30 to 59 (AIGDIFRTIIKTSTSEAELINNYVKQGELI) is NMP. AMP-binding positions include arginine 36, 57–59 (ELI), 85–88 (GYPR), and glutamine 92. Residues 122–160 (GRYSCKNCGKIYNRYFLQPKTDNVCDVCGSSTFDYRKDD) form an LID region. Arginine 123 contributes to the ATP binding site. Zn(2+) is bound by residues cysteine 126 and cysteine 129. Residue 132–133 (IY) coordinates ATP. Residues cysteine 146 and cysteine 149 each contribute to the Zn(2+) site. Residues arginine 157 and arginine 168 each contribute to the AMP site. Lysine 196 provides a ligand contact to ATP.

It belongs to the adenylate kinase family. In terms of assembly, monomer.

It is found in the cytoplasm. The enzyme catalyses AMP + ATP = 2 ADP. It participates in purine metabolism; AMP biosynthesis via salvage pathway; AMP from ADP: step 1/1. In terms of biological role, catalyzes the reversible transfer of the terminal phosphate group between ATP and AMP. Plays an important role in cellular energy homeostasis and in adenine nucleotide metabolism. This Rickettsia africae (strain ESF-5) protein is Adenylate kinase.